Here is a 934-residue protein sequence, read N- to C-terminus: Complement component C6 (934 aa).

The N-terminal stretch at 1–21 (MTRHLTLCFILLVMLIDKSEA) is a signal peptide. Disulfide bonds link Cys-22-Cys-61, Cys-24-Cys-65, Cys-35-Cys-73, Cys-39-Cys-78, Cys-82-Cys-117, Cys-93-Cys-127, Cys-96-Cys-133, Cys-140-Cys-151, Cys-146-Cys-164, Cys-158-Cys-173, and Cys-180-Cys-218. TSP type-1 domains lie at 22 to 79 (CFCD…QTCP) and 81 to 134 (NCVL…KLCK). One can recognise an LDL-receptor class A domain in the interval 138 to 175 (TNCKNKFLCDSGRCIPSKLECNGENDCGDNSDERNCGR). 6 residues coordinate Ca(2+): Leu-156, Asn-159, Glu-161, Asp-163, Asp-169, and Glu-170. In terms of domain architecture, MACPF spans 176 to 522 (TKPVCTRIYT…EYAAKFDPCQ (347 aa)). The beta stranded transmembrane segment at 278 to 290 (FFPIPIFHFSEKN) threads the bilayer. A glycan (N-linked (GlcNAc...) asparagine) is linked at Asn-324. 16 disulfide bridges follow: Cys-399/Cys-420, Cys-499/Cys-623, Cys-521/Cys-570, Cys-523/Cys-539, Cys-526/Cys-541, Cys-543/Cys-552, Cys-577/Cys-611, Cys-589/Cys-601, Cys-644/Cys-686, Cys-672/Cys-699, Cys-704/Cys-746, Cys-732/Cys-761, Cys-773/Cys-823, Cys-784/Cys-801, Cys-786/Cys-837, and Cys-793/Cys-816. The beta stranded transmembrane segment at 402–415 (YETKKLKFLYMEIH) threads the bilayer. Positions 523-553 (CAPCPNNGRPRLSGTECLCVCQSGTYGENCE) constitute an EGF-like domain. Residues 565 to 612 (DGNWGCWSSWSACNAAYRRSRTRECNNPAPQRGGQSCGGKDQQEEDCT) enclose the TSP type-1 3 domain. CCP regions lie at residues 611–688 (CTVS…RCLP) and 689–765 (DRTW…EQAI). 2 Sushi domains span residues 642–701 (SGCS…ECQR) and 702–763 (TSCL…TCEQ). The tract at residues 642-934 (SGCSQPPLPE…EILNPGRCPD (293 aa)) is C5b-binding domain. A factor I module (FIM) 1 region spans residues 766–840 (LTKSKDLCPP…FVHSGSCQEG (75 aa)). Residues 785 to 839 (ICMSPEEDCSAYSEDLCIFDGGSSQYFTSSACKFLAGKCLNNTQSHFVHSGSCQE) enclose the Kazal-like 1 domain. Residues Asn-825, Asn-855, and Asn-872 are each glycosylated (N-linked (GlcNAc...) asparagine). Positions 858-934 (KRVSCGYNTC…EILNPGRCPD (77 aa)) are factor I module (FIM) 2. 5 cysteine pairs are disulfide-bonded: Cys-862–Cys-873, Cys-867–Cys-919, Cys-880–Cys-897, Cys-882–Cys-932, and Cys-888–Cys-912. The Kazal-like 2 domain occupies 876-934 (HTSNCVCLLPPQCSKDENQLYCVKIGSSMREKTVNICTLGAVRCANIKVEILNPGRCPD).

The protein belongs to the complement C6/C7/C8/C9 family. Component of the membrane attack complex (MAC), composed of complement C5b, C6, C7, C8A, C8B, C8G and multiple copies of the pore-forming subunit C9. All cysteine residues are assumed to be cross-linked to one another. Individual modules containing an even number of conserved cysteine residues are supposed to have disulfide linkages only within the same module.

It localises to the secreted. Its subcellular location is the target cell membrane. Its activity is regulated as follows. Membrane attack complex (MAC) assembly is inhibited by CD59, thereby protecting self-cells from damage during complement activation. MAC assembly is also inhibited by clusterin (CLU) chaperones that inhibit polymerization of C9. In terms of biological role, component of the membrane attack complex (MAC), a multiprotein complex activated by the complement cascade, which inserts into a target cell membrane and forms a pore, leading to target cell membrane rupture and cell lysis. The MAC is initiated by proteolytic cleavage of C5 into complement C5b in response to the classical, alternative, lectin and GZMK complement pathways. The complement pathways consist in a cascade of proteins that leads to phagocytosis and breakdown of pathogens and signaling that strengthens the adaptive immune system. Together with component C5b, involved in MAC complex assembly: complement C5b and C6 associate with the outer leaflet of target cell membrane, reducing the energy for membrane bending. The chain is Complement component C6 from Mus musculus (Mouse).